The sequence spans 708 residues: Leukotoxin translocation ATP-binding protein LktB (708 aa).

Residues 1–126 (MEANHQRNDL…ACYQGQLILV (126 aa)) form the Peptidase C39 domain. An ABC transmembrane type-1 domain is found at 155-437 (FLETLIVSIF…LAQLWQDFQQ (283 aa)). The next 5 helical transmembrane spans lie at 159–179 (LIVS…FQVV), 192–212 (LNII…LSGL), 270–290 (ALTS…MWYY), 296–316 (LVIL…SPIL), and 389–409 (VMVI…LSIG). The 236-residue stretch at 469–704 (ISFKNIRFRY…SNGLYSYLHQ (236 aa)) folds into the ABC transporter domain. 503–510 (GRSGSGKS) is a binding site for ATP.

The protein belongs to the ABC transporter superfamily. Protein-1 exporter (TC 3.A.1.109) family. In terms of assembly, homodimer.

It localises to the cell inner membrane. The enzyme catalyses ATP + H2O + proteinSide 1 = ADP + phosphate + proteinSide 2.. Part of the ABC transporter complex LktBD involved in leukotoxin export. Transmembrane domains (TMD) form a pore in the inner membrane and the ATP-binding domain (NBD) is responsible for energy generation. In Mannheimia haemolytica (Pasteurella haemolytica), this protein is Leukotoxin translocation ATP-binding protein LktB (lktB).